The primary structure comprises 384 residues: Outer membrane protein assembly factor BamB (384 aa).

The N-terminal stretch at 1–21 (MKLTLKRKFIAVLALTSLLGA) is a signal peptide. Residue C22 is the site of N-palmitoyl cysteine attachment. C22 is lipidated: S-diacylglycerol cysteine.

Belongs to the BamB family. As to quaternary structure, part of the Bam complex.

Its subcellular location is the cell outer membrane. Its function is as follows. Part of the outer membrane protein assembly complex, which is involved in assembly and insertion of beta-barrel proteins into the outer membrane. This is Outer membrane protein assembly factor BamB from Taylorella asinigenitalis (strain MCE3).